The primary structure comprises 446 residues: Exodeoxyribonuclease 7 large subunit (446 aa).

This sequence belongs to the XseA family. Heterooligomer composed of large and small subunits.

The protein localises to the cytoplasm. It carries out the reaction Exonucleolytic cleavage in either 5'- to 3'- or 3'- to 5'-direction to yield nucleoside 5'-phosphates.. Functionally, bidirectionally degrades single-stranded DNA into large acid-insoluble oligonucleotides, which are then degraded further into small acid-soluble oligonucleotides. In Streptococcus agalactiae serotype III (strain NEM316), this protein is Exodeoxyribonuclease 7 large subunit.